The sequence spans 265 residues: Upstream stimulatory factor (265 aa).

A compositionally biased stretch (basic and acidic residues) spans 1–18 (MDVQDHTLDQGPQDKDKD). Disordered regions lie at residues 1 to 21 (MDVQ…DLEE) and 119 to 149 (ASAA…AAGG). Positions 134–144 (GEQQPGITQPS) are enriched in polar residues. The bHLH domain occupies 190-245 (RRRATHNEVERRRRDKINNWIVKLSKIIPDCNIDHSKQGQSKGGILTKTCDYIHDL).

In terms of assembly, efficient DNA binding requires dimerization with another bHLH protein. Binds DNA as a homodimer or a heterodimer. In terms of tissue distribution, enriched in ectodermal tissue.

It is found in the nucleus. May act as a transcription factor which recognizes the CACGTG motif on SPEC gene promoters. This is Upstream stimulatory factor from Strongylocentrotus purpuratus (Purple sea urchin).